The chain runs to 464 residues: Secretion-regulating guanine nucleotide exchange factor (464 aa).

7 RCC1 repeats span residues 14-66, 68-118, 119-170, 172-229, 230-282, 283-349, and 350-401; these read AAAL…VVTD, GSLF…ILTE, NGQV…AATA, GTVF…SLTD, AGEL…AQTV, TGKV…LAVI, and GGVC…ALCQ. Residues 301–313 show a composition bias toward basic and acidic residues; the sequence is VETREGWESEKQD. The tract at residues 301-323 is disordered; the sequence is VETREGWESEKQDPSLPGSGPQK. The segment at 411 to 464 is disordered; sequence HPSVTSPSPDATKEARSQEAMEQERNQKERHAETSPQAQSDRFRNGGLVAETLE. Positions 421 to 443 are enriched in basic and acidic residues; that stretch reads ATKEARSQEAMEQERNQKERHAE. A Phosphoserine modification is found at S427.

In terms of assembly, interacts with SEC5. The interaction occurs only in the presence of magnesium or manganese and is stimulated by dCTP or GTP.

It localises to the cytoplasm. It is found in the nucleus. Probable guanine nucleotide exchange factor (GEF), which may be involved in the secretion process. This Bos taurus (Bovine) protein is Secretion-regulating guanine nucleotide exchange factor (SERGEF).